We begin with the raw amino-acid sequence, 450 residues long: Methylenetetrahydrofolate--tRNA-(uracil-5-)-methyltransferase TrmFO (450 aa).

Glycine 9–glycine 14 serves as a coordination point for FAD.

This sequence belongs to the MnmG family. TrmFO subfamily. Requires FAD as cofactor.

It is found in the cytoplasm. The enzyme catalyses uridine(54) in tRNA + (6R)-5,10-methylene-5,6,7,8-tetrahydrofolate + NADH + H(+) = 5-methyluridine(54) in tRNA + (6S)-5,6,7,8-tetrahydrofolate + NAD(+). The catalysed reaction is uridine(54) in tRNA + (6R)-5,10-methylene-5,6,7,8-tetrahydrofolate + NADPH + H(+) = 5-methyluridine(54) in tRNA + (6S)-5,6,7,8-tetrahydrofolate + NADP(+). In terms of biological role, catalyzes the folate-dependent formation of 5-methyl-uridine at position 54 (M-5-U54) in all tRNAs. This Roseobacter denitrificans (strain ATCC 33942 / OCh 114) (Erythrobacter sp. (strain OCh 114)) protein is Methylenetetrahydrofolate--tRNA-(uracil-5-)-methyltransferase TrmFO.